Here is a 713-residue protein sequence, read N- to C-terminus: Ribosomal RNA large subunit methyltransferase K/L (713 aa).

The THUMP domain maps to 43 to 154 (LAYRITLWTR…NGVITIAMNF (112 aa)).

This sequence belongs to the methyltransferase superfamily. RlmKL family.

It is found in the cytoplasm. It carries out the reaction guanosine(2445) in 23S rRNA + S-adenosyl-L-methionine = N(2)-methylguanosine(2445) in 23S rRNA + S-adenosyl-L-homocysteine + H(+). The enzyme catalyses guanosine(2069) in 23S rRNA + S-adenosyl-L-methionine = N(2)-methylguanosine(2069) in 23S rRNA + S-adenosyl-L-homocysteine + H(+). Specifically methylates the guanine in position 2445 (m2G2445) and the guanine in position 2069 (m7G2069) of 23S rRNA. The polypeptide is Ribosomal RNA large subunit methyltransferase K/L (Shewanella sp. (strain MR-7)).